Consider the following 174-residue polypeptide: Adenylate kinase (174 aa).

The segment at 12-41 (STGDMLRAAIKAGTPLGLEAKKIIDEGGLV) is NMP. Residues T13, R18, 39–41 (GLV), 67–70 (GFPR), and Q74 contribute to the AMP site. An LID region spans residues 104–141 (GRRVHLASGRTYHIAYNPPKVEGKDDVTGEDLIQRDDD). ATP-binding positions include R105 and 114 to 115 (TY). The AMP site is built by R138 and R149.

It belongs to the adenylate kinase family. Monomer.

The protein localises to the cytoplasm. It carries out the reaction AMP + ATP = 2 ADP. It participates in purine metabolism; AMP biosynthesis via salvage pathway; AMP from ADP: step 1/1. In terms of biological role, catalyzes the reversible transfer of the terminal phosphate group between ATP and AMP. Plays an important role in cellular energy homeostasis and in adenine nucleotide metabolism. In Neisseria animalis, this protein is Adenylate kinase.